A 287-amino-acid chain; its full sequence is Short-chain dehydrogenase virD (287 aa).

8 residues coordinate NADP(+): Val-10, Thr-36, Asp-57, Asn-85, Tyr-149, Lys-153, Val-182, and Thr-184. Catalysis depends on Tyr-149, which acts as the Proton acceptor. The active-site Lowers pKa of active site Tyr is the Lys-153.

The protein belongs to the short-chain dehydrogenases/reductases (SDR) family.

Its pathway is secondary metabolite biosynthesis. In terms of biological role, short-chain dehydrogenase; part of the gene cluster that mediates the biosynthesis of virensols and trichoxide, fungal natural products that contain or are derived from a salicylaldehyde core. The pathway begins with the synthesis of the reduced chain in virensol C by the highly reducing polyketide synthase virA via condensation of one acetate and 8 malonate units. VirA has interesting programming rules since the first 2 ketides are fully reduced, the 3 following ketides undergo beta-dehydration, and the last 3 ketides are only reduced to beta-hydroxys to yield the trihydroxy portion. The production of aldehyde virensol C by virA alone is surprising, since virA does not contain a reductase (R) domain that is typically associated with reductive product release in HRPKS. The cupin-domain enzyme virC is involved in enhancing virA product turnover. The short-chain dehydrogenase virB then oxidizes the C-7 alcohol of virensol C to a ketone, yielding virensol D. Virensol D is further transformed to salicylaldehyde 5-deoxyaurocitrin by the short-chain dehydrogenase virD. VirD catalyzes the dehydrogenation of C-3 to form the beta-ketone aldehyde, which is followed by the generation of the nucleophilic C-2 that is required for the intramolecular aldol condensation between C-2 and C-7, itself followed by dehydration and aromatization which leads to salicylaldehyde 5-deoxyaurocitrin. While the dehydrogenation of virensol D is definitely catalyzed by virD, the aldol condensation and dehydration may be uncatalyzed or assisted by virD. The short chain dehydrogenase virG then converts salicylaldehyde 5-deoxyaurocitrin into virensol B which is further hydroxylated by the cytochrome P450 monooxygenase virE to yield the hydroquinone virensol A. VirI then may oxidize virensol A to form the quinone, while virH performs the epoxidation. Finally, the two remaining short-chain dehydrogenases, virK and virL, are probably responsible for reducing the ketones to the corresponding alcohols to furnish the epoxycyclohexanol structure in trichoxide. This Hypocrea virens (strain Gv29-8 / FGSC 10586) (Gliocladium virens) protein is Short-chain dehydrogenase virD.